Consider the following 445-residue polypeptide: Argininosuccinate synthase (445 aa).

Residues Ala-17–Ser-25 and Ala-43 each bind ATP. Tyr-99 contributes to the L-citrulline binding site. Residues Gly-129 and Thr-131 each contribute to the ATP site. Thr-131, Asn-135, and Asp-136 together coordinate L-aspartate. Asn-135 serves as a coordination point for L-citrulline. Residue Asp-136 coordinates ATP. The L-citrulline site is built by Arg-139 and Ser-192. Residue Asp-194 coordinates ATP. The L-citrulline site is built by Thr-201, Glu-203, and Glu-280.

The protein belongs to the argininosuccinate synthase family. Type 2 subfamily. Homotetramer.

Its subcellular location is the cytoplasm. The catalysed reaction is L-citrulline + L-aspartate + ATP = 2-(N(omega)-L-arginino)succinate + AMP + diphosphate + H(+). It functions in the pathway amino-acid biosynthesis; L-arginine biosynthesis; L-arginine from L-ornithine and carbamoyl phosphate: step 2/3. The sequence is that of Argininosuccinate synthase from Rhodopseudomonas palustris (strain BisB5).